The primary structure comprises 269 residues: Formamidopyrimidine-DNA glycosylase (269 aa).

Catalysis depends on Pro2, which acts as the Schiff-base intermediate with DNA. Glu3 serves as the catalytic Proton donor. Catalysis depends on Lys57, which acts as the Proton donor; for beta-elimination activity. DNA contacts are provided by His90, Arg109, and Lys150. Residues 235–269 (LVYGKAGEPCPECGEPLQELKIGQRNTFFCNECQQ) form an FPG-type zinc finger. Residue Arg259 is the Proton donor; for delta-elimination activity of the active site.

This sequence belongs to the FPG family. Monomer. Zn(2+) serves as cofactor.

The enzyme catalyses Hydrolysis of DNA containing ring-opened 7-methylguanine residues, releasing 2,6-diamino-4-hydroxy-5-(N-methyl)formamidopyrimidine.. It carries out the reaction 2'-deoxyribonucleotide-(2'-deoxyribose 5'-phosphate)-2'-deoxyribonucleotide-DNA = a 3'-end 2'-deoxyribonucleotide-(2,3-dehydro-2,3-deoxyribose 5'-phosphate)-DNA + a 5'-end 5'-phospho-2'-deoxyribonucleoside-DNA + H(+). In terms of biological role, involved in base excision repair of DNA damaged by oxidation or by mutagenic agents. Acts as a DNA glycosylase that recognizes and removes damaged bases. Has a preference for oxidized purines, such as 7,8-dihydro-8-oxoguanine (8-oxoG). Has AP (apurinic/apyrimidinic) lyase activity and introduces nicks in the DNA strand. Cleaves the DNA backbone by beta-delta elimination to generate a single-strand break at the site of the removed base with both 3'- and 5'-phosphates. The protein is Formamidopyrimidine-DNA glycosylase of Vibrio parahaemolyticus serotype O3:K6 (strain RIMD 2210633).